A 325-amino-acid chain; its full sequence is CRISPR-associated endonuclease Cas1 3 (325 aa).

3 residues coordinate Mn(2+): E152, H217, and E232.

Belongs to the CRISPR-associated endonuclease Cas1 family. In terms of assembly, homodimer, forms a heterotetramer with a Cas2 homodimer. It depends on Mg(2+) as a cofactor. The cofactor is Mn(2+).

Functionally, CRISPR (clustered regularly interspaced short palindromic repeat), is an adaptive immune system that provides protection against mobile genetic elements (viruses, transposable elements and conjugative plasmids). CRISPR clusters contain spacers, sequences complementary to antecedent mobile elements, and target invading nucleic acids. CRISPR clusters are transcribed and processed into CRISPR RNA (crRNA). Acts as a dsDNA endonuclease. Involved in the integration of spacer DNA into the CRISPR cassette. The chain is CRISPR-associated endonuclease Cas1 3 from Thermodesulfovibrio yellowstonii (strain ATCC 51303 / DSM 11347 / YP87).